A 234-amino-acid polypeptide reads, in one-letter code: Riboflavin kinase (234 aa).

An H-T-H motif-like region spans residues 1–98 (MAESTTAVGH…QEIFGDNSSV (98 aa)). The riboflavin kinase stretch occupies residues 99-234 (VELTGTVTSG…RITVQLKPKE (136 aa)). A CDP-binding site is contributed by 108-113 (GMGEGR). Mg(2+) contacts are provided by Thr-137 and Asn-139. Residues Thr-199 and Glu-207 each coordinate FMN. 212–215 (ERLR) is a binding site for CDP.

Belongs to the archaeal riboflavin kinase family. Mg(2+) serves as cofactor.

It catalyses the reaction riboflavin + CTP = CDP + FMN + H(+). It functions in the pathway cofactor biosynthesis; FMN biosynthesis; FMN from riboflavin (CTP route): step 1/1. Its function is as follows. Catalyzes the CTP-dependent phosphorylation of riboflavin (vitamin B2) to form flavin mononucleotide (FMN). In Haloquadratum walsbyi (strain DSM 16790 / HBSQ001), this protein is Riboflavin kinase (ribK).